A 176-amino-acid chain; its full sequence is ATP-dependent protease subunit HslV (176 aa).

Residue threonine 5 is part of the active site. Residues alanine 161, cysteine 164, and threonine 167 each contribute to the Na(+) site.

It belongs to the peptidase T1B family. HslV subfamily. A double ring-shaped homohexamer of HslV is capped on each side by a ring-shaped HslU homohexamer. The assembly of the HslU/HslV complex is dependent on binding of ATP.

The protein localises to the cytoplasm. The catalysed reaction is ATP-dependent cleavage of peptide bonds with broad specificity.. Allosterically activated by HslU binding. In terms of biological role, protease subunit of a proteasome-like degradation complex believed to be a general protein degrading machinery. This chain is ATP-dependent protease subunit HslV, found in Pelotomaculum thermopropionicum (strain DSM 13744 / JCM 10971 / SI).